A 346-amino-acid polypeptide reads, in one-letter code: S-adenosylmethionine:tRNA ribosyltransferase-isomerase (346 aa).

It belongs to the QueA family. In terms of assembly, monomer.

It localises to the cytoplasm. The enzyme catalyses 7-aminomethyl-7-carbaguanosine(34) in tRNA + S-adenosyl-L-methionine = epoxyqueuosine(34) in tRNA + adenine + L-methionine + 2 H(+). Its pathway is tRNA modification; tRNA-queuosine biosynthesis. Transfers and isomerizes the ribose moiety from AdoMet to the 7-aminomethyl group of 7-deazaguanine (preQ1-tRNA) to give epoxyqueuosine (oQ-tRNA). The protein is S-adenosylmethionine:tRNA ribosyltransferase-isomerase of Borreliella afzelii (strain PKo) (Borrelia afzelii).